A 435-amino-acid chain; its full sequence is Methionine aminopeptidase 2 (435 aa).

The segment at 57 to 77 (AIDGDQAAAKKKKSKKKKKKA) is disordered. Residues 65-77 (AKKKKSKKKKKKA) show a composition bias toward basic residues. A substrate-binding site is contributed by His188. A divalent metal cation contacts are provided by Asp208, Asp219, and His288. His296 is a binding site for substrate. Residues Glu321 and Glu416 each contribute to the a divalent metal cation site.

It belongs to the peptidase M24A family. Methionine aminopeptidase eukaryotic type 2 subfamily. The cofactor is Co(2+). It depends on Zn(2+) as a cofactor. Requires Mn(2+) as cofactor. Fe(2+) serves as cofactor.

The protein resides in the cytoplasm. The catalysed reaction is Release of N-terminal amino acids, preferentially methionine, from peptides and arylamides.. Functionally, cotranslationally removes the N-terminal methionine from nascent proteins. The N-terminal methionine is often cleaved when the second residue in the primary sequence is small and uncharged (Met-Ala-, Cys, Gly, Pro, Ser, Thr, or Val). In Clavispora lusitaniae (strain ATCC 42720) (Yeast), this protein is Methionine aminopeptidase 2.